Here is a 222-residue protein sequence, read N- to C-terminus: UPF0758 protein Lcho_0695 (222 aa).

In terms of domain architecture, MPN spans Val-100–Leu-222. Zn(2+) is bound by residues His-171, His-173, and Asp-184. The short motif at His-171–Asp-184 is the JAMM motif element.

Belongs to the UPF0758 family.

The sequence is that of UPF0758 protein Lcho_0695 from Leptothrix cholodnii (strain ATCC 51168 / LMG 8142 / SP-6) (Leptothrix discophora (strain SP-6)).